The sequence spans 220 residues: Regulatory protein VanRB (220 aa).

The Response regulatory domain maps to 4–117 (RILLVEDDDH…ILLKRVEALL (114 aa)). 4-aspartylphosphate is present on Asp53. Residues 124–218 (AKEFRVGRLT…IRGVGYRLEE (95 aa)) constitute a DNA-binding region (ompR/PhoB-type).

May be phosphorylated by VanSB. May also be dephosphorylated by VanSB.

It is found in the cytoplasm. Member of the two-component regulatory system VanSB/VanRB. Activates the transcription of vanSB, vanYB and vanW in response to vancomycin which results in vancomycin resistance. This is Regulatory protein VanRB (vanRB) from Enterococcus faecalis (strain ATCC 700802 / V583).